Consider the following 174-residue polypeptide: Repair DNA polymerase X (174 aa).

The involved in ssDNA binding stretch occupies residues 42 to 51; sequence REEKMLNDVD. Mg(2+) contacts are provided by Asp-49 and Asp-51. The cysteines at positions 81 and 86 are disulfide-linked. Asp-100 is a binding site for Mg(2+).

This sequence belongs to the DNA polymerase type-X family. It depends on Mg(2+) as a cofactor.

The protein resides in the virion. It catalyses the reaction DNA(n) + a 2'-deoxyribonucleoside 5'-triphosphate = DNA(n+1) + diphosphate. In terms of biological role, error-prone polymerase lacking a proofreading 3'-5' exonuclease which catalyzes the gap-filling reaction during the DNA repair process. Specifically binds intermediates in the single-nucleotide base-excision repair process. Also catalyzes DNA polymerization with low nucleotide-insertion fidelity. Probably acts as a strategic DNA mutase, which gives rise to a rapid emergence of variants. Generates mismatched G-G pairs, in that case, the polymerase first binds the deoxynucleotide followed by mismatch formation. Together with the viral DNA ligase, fills the single nucleotide gaps generated by the AP endonuclease. Binds DNA with high affinity via the helix alphaE. In Ornithodoros (relapsing fever ticks), this protein is Repair DNA polymerase X.